A 398-amino-acid polypeptide reads, in one-letter code: S-adenosylmethionine synthase (398 aa).

An ATP-binding site is contributed by H15. D17 serves as a coordination point for Mg(2+). Residue E43 participates in K(+) binding. L-methionine is bound by residues E56 and Q99. Residues 99–109 (QSPDIAQGVDT) are flexible loop. Residues 175–177 (DGK), 243–244 (RF), D252, 258–259 (RK), A275, and K279 each bind ATP. Residue D252 participates in L-methionine binding. L-methionine is bound at residue K283.

This sequence belongs to the AdoMet synthase family. In terms of assembly, homotetramer; dimer of dimers. Mg(2+) serves as cofactor. It depends on K(+) as a cofactor.

It is found in the cytoplasm. It catalyses the reaction L-methionine + ATP + H2O = S-adenosyl-L-methionine + phosphate + diphosphate. It functions in the pathway amino-acid biosynthesis; S-adenosyl-L-methionine biosynthesis; S-adenosyl-L-methionine from L-methionine: step 1/1. Functionally, catalyzes the formation of S-adenosylmethionine (AdoMet) from methionine and ATP. The overall synthetic reaction is composed of two sequential steps, AdoMet formation and the subsequent tripolyphosphate hydrolysis which occurs prior to release of AdoMet from the enzyme. This Parafrankia sp. (strain EAN1pec) protein is S-adenosylmethionine synthase.